The following is a 178-amino-acid chain: C-phycoerythrin class 2 subunit beta (178 aa).

Phycourobilin contacts are provided by C50 and C61. (2R,3E)-phycoerythrobilin-binding residues include C82 and C159.

It belongs to the phycobiliprotein family. Heterodimer of an alpha and a beta chain. Post-translationally, contains two covalently linked phycoerythrobilin chromophores and one covalently linked phycourobilin chromophore.

Its subcellular location is the cellular thylakoid membrane. Functionally, light-harvesting photosynthetic bile pigment-protein from the phycobiliprotein complex. The polypeptide is C-phycoerythrin class 2 subunit beta (mpeB) (Synechococcus sp. (strain WH8103)).